A 461-amino-acid polypeptide reads, in one-letter code: Flavin-containing monooxygenase FMO GS-OX4 (461 aa).

17–22 (GAGAAG) provides a ligand contact to FAD. Residue 211 to 216 (GNFASG) coordinates NADP(+).

Belongs to the FMO family.

The enzyme catalyses a (Z)-omega-(methylsulfanyl)-N-sulfo-alkylhydroximate S-glucoside + NADPH + O2 + H(+) = a (Z)-omega-(methylsulfinyl)-alkyl-glucosinolate + NADP(+) + H2O. Catalyzes the conversion of methylthioalkyl glucosinolates of any chain length into methylsulfinylalkyl glucosinolates. The polypeptide is Flavin-containing monooxygenase FMO GS-OX4 (FMOGS-OX4) (Arabidopsis thaliana (Mouse-ear cress)).